The sequence spans 70 residues: Kappa-scoloptoxin(07)-Ssm2b (70 aa).

An N-terminal signal peptide occupies residues 1–19; sequence MLVFYALLFVSVFSSTVMG. Positions 20-39 are excised as a propeptide; that stretch reads ATIDKPILREAIEEIDVNKR.

The protein belongs to the scoloptoxin-07 family. Post-translationally, contains 3 disulfide bonds. In terms of tissue distribution, expressed by the venom gland.

The protein localises to the secreted. Its function is as follows. Inhibits voltage-gated potassium channels. In Scolopendra mutilans (Chinese red-headed centipede), this protein is Kappa-scoloptoxin(07)-Ssm2b.